A 313-amino-acid polypeptide reads, in one-letter code: Thymidylate synthase (313 aa).

Residues 1–28 form a disordered region; sequence MPVAGSELPRRPLPPAAQERDAEPRPPH. A compositionally biased stretch (basic and acidic residues) spans 18 to 28; it reads QERDAEPRPPH. A dUMP-binding site is contributed by arginine 50. At serine 114 the chain carries Phosphoserine. DUMP is bound by residues 175–176, 195–196, 215–218, asparagine 226, and 256–258; these read RR, CH, RSGD, and HIY. The Nucleophile role is filled by cysteine 195. (6R)-5,10-methylene-5,6,7,8-tetrahydrofolate is bound at residue aspartate 218. Glycyl lysine isopeptide (Lys-Gly) (interchain with G-Cter in SUMO2) cross-links involve residues lysine 287, lysine 292, and lysine 308. Alanine 312 is a (6R)-5,10-methylene-5,6,7,8-tetrahydrofolate binding site.

This sequence belongs to the thymidylate synthase family. In terms of assembly, homodimer.

Its subcellular location is the nucleus. The protein localises to the cytoplasm. It localises to the mitochondrion. It is found in the mitochondrion matrix. The protein resides in the mitochondrion inner membrane. The enzyme catalyses dUMP + (6R)-5,10-methylene-5,6,7,8-tetrahydrofolate = 7,8-dihydrofolate + dTMP. The protein operates within pyrimidine metabolism; dTTP biosynthesis. Catalyzes the reductive methylation of 2'-deoxyuridine 5'-monophosphate (dUMP) to thymidine 5'-monophosphate (dTMP), using the cosubstrate, 5,10- methylenetetrahydrofolate (CH2H4folate) as a 1-carbon donor and reductant and contributes to the de novo mitochondrial thymidylate biosynthesis pathway. This chain is Thymidylate synthase, found in Homo sapiens (Human).